We begin with the raw amino-acid sequence, 293 residues long: Bifunctional protein FolD (293 aa).

NADP(+) contacts are provided by residues 165–167 (GRS), Thr194, and Val235.

It belongs to the tetrahydrofolate dehydrogenase/cyclohydrolase family. Homodimer.

It carries out the reaction (6R)-5,10-methylene-5,6,7,8-tetrahydrofolate + NADP(+) = (6R)-5,10-methenyltetrahydrofolate + NADPH. The catalysed reaction is (6R)-5,10-methenyltetrahydrofolate + H2O = (6R)-10-formyltetrahydrofolate + H(+). The protein operates within one-carbon metabolism; tetrahydrofolate interconversion. Its function is as follows. Catalyzes the oxidation of 5,10-methylenetetrahydrofolate to 5,10-methenyltetrahydrofolate and then the hydrolysis of 5,10-methenyltetrahydrofolate to 10-formyltetrahydrofolate. This Syntrophus aciditrophicus (strain SB) protein is Bifunctional protein FolD.